Here is a 410-residue protein sequence, read N- to C-terminus: Exopolygalacturonase (410 aa).

Positions Met1–Gly22 are cleaved as a signal peptide. Residue Asn89 is glycosylated (N-linked (GlcNAc...) asparagine). PbH1 repeat units lie at residues Cys192 to Asp218, Ser219 to Pro240, Thr242 to Ser262, Val272 to Ala293, and Ala337 to Asp377. Asp233 functions as the Proton donor in the catalytic mechanism. A disulfide bridge connects residues Cys235 and Cys252. Asn246 carries N-linked (GlcNAc...) asparagine glycosylation. Residue His256 is part of the active site. N-linked (GlcNAc...) asparagine glycosylation occurs at Asn349. Cys364 and Cys370 are joined by a disulfide. The N-linked (GlcNAc...) asparagine glycan is linked to Asn387. An intrachain disulfide couples Cys393 to Cys409.

The protein belongs to the glycosyl hydrolase 28 family. As to expression, pollen.

It is found in the secreted. Its subcellular location is the cell wall. It carries out the reaction [(1-&gt;4)-alpha-D-galacturonosyl](n) + H2O = alpha-D-galacturonate + [(1-&gt;4)-alpha-D-galacturonosyl](n-1). Functionally, may function in depolymerizing pectin during pollen development, germination, and tube growth. Acts as an exo-polygalacturonase. The protein is Exopolygalacturonase (PG1) of Zea mays (Maize).